A 275-amino-acid polypeptide reads, in one-letter code: Echotoxin-2 (275 aa).

The signal sequence occupies residues 1–23; it reads MKRNILALVVVVALISQSRPAES. A plays an important role in the hemolytic activity region spans residues 23–32; it reads SAGGTIIATL. The N-terminal region stretch occupies residues 49–67; sequence ETGASVASAAAAATSSDYS. Residues G123, S141, P143, Y176, and Y177 each coordinate phosphocholine. A trp-rich region, which is important for the binding to lipid membrane region spans residues 141–156; sequence SAPYNFDFYSNWLAVG. A propeptide spanning residues 249 to 275 is cleaved from the precursor; the sequence is RAIQQELARRAEEEKQRKRKALDEMLK.

This sequence belongs to the actinoporin family. Sea anemone subfamily. In terms of assembly, octamer or nonamer in membranes. Monomer in the soluble state. As to expression, salivary gland.

The protein resides in the secreted. It localises to the nematocyst. The protein localises to the target cell membrane. In terms of biological role, pore-forming protein that forms cations-selective hydrophilic pores of around 1 nm and causes cardiac stimulation and cytolysis. Pore formation is a multi-step process that involves specific recognition of membrane sphingomyelin (but neither cholesterol nor phosphatidylcholine) using aromatic rich region and adjacent phosphocholine (POC) binding site, firm binding to the membrane (mainly driven by hydrophobic interactions) accompanied by the transfer of the N-terminal region to the lipid-water interface and finally pore formation after oligomerization of monomers. Exhibits both hemolytic and lethal activities. Gangliosides potently inhibits the hemolytic activity. In Monoplex parthenopeus (Giant triton), this protein is Echotoxin-2.